Here is a 439-residue protein sequence, read N- to C-terminus: Xylose isomerase (439 aa).

Catalysis depends on residues H100 and D103. Mg(2+) contacts are provided by E231, E267, H270, D295, D306, D308, and D338.

This sequence belongs to the xylose isomerase family. As to quaternary structure, homotetramer. The cofactor is Mg(2+).

Its subcellular location is the cytoplasm. The enzyme catalyses alpha-D-xylose = alpha-D-xylulofuranose. This is Xylose isomerase from Rhodopirellula baltica (strain DSM 10527 / NCIMB 13988 / SH1).